The primary structure comprises 543 residues: Methionine--tRNA ligase (543 aa).

Residues 13–23 (PYANGPLHVGH) carry the 'HIGH' region motif. Zn(2+) is bound by residues cysteine 145, cysteine 148, cysteine 158, and cysteine 161. Positions 334-338 (QFSKS) match the 'KMSKS' region motif. An ATP-binding site is contributed by lysine 337.

Belongs to the class-I aminoacyl-tRNA synthetase family. MetG type 1 subfamily. The cofactor is Zn(2+).

It localises to the cytoplasm. The catalysed reaction is tRNA(Met) + L-methionine + ATP = L-methionyl-tRNA(Met) + AMP + diphosphate. Its function is as follows. Is required not only for elongation of protein synthesis but also for the initiation of all mRNA translation through initiator tRNA(fMet) aminoacylation. In Thermoplasma volcanium (strain ATCC 51530 / DSM 4299 / JCM 9571 / NBRC 15438 / GSS1), this protein is Methionine--tRNA ligase.